The following is a 146-amino-acid chain: U1 small nuclear ribonucleoprotein C (146 aa).

The Matrin-type zinc-finger motif lies at 4 to 36 (YYCDYCDTYLTHDSPSVRKTHCTGRKHRDNVKF). The disordered stretch occupies residues 64–96 (NNPFAGGPSSAPPKPSGVSIPPPNMGAPPRPGM). A compositionally biased stretch (pro residues) spans 73-96 (SAPPKPSGVSIPPPNMGAPPRPGM).

It belongs to the U1 small nuclear ribonucleoprotein C family. U1 snRNP is composed of the 7 core Sm proteins B/B', D1, D2, D3, E, F and G that assemble in a heptameric protein ring on the Sm site of the small nuclear RNA to form the core snRNP, and at least 3 U1 snRNP-specific proteins U1-70K, U1-A and U1-C. U1-C interacts with U1 snRNA and the 5' splice-site region of the pre-mRNA.

Its subcellular location is the nucleus. Functionally, component of the spliceosomal U1 snRNP, which is essential for recognition of the pre-mRNA 5' splice-site and the subsequent assembly of the spliceosome. U1-C is directly involved in initial 5' splice-site recognition for both constitutive and regulated alternative splicing. The interaction with the 5' splice-site seems to precede base-pairing between the pre-mRNA and the U1 snRNA. Stimulates commitment or early (E) complex formation by stabilizing the base pairing of the 5' end of the U1 snRNA and the 5' splice-site region. This is U1 small nuclear ribonucleoprotein C from Drosophila pseudoobscura pseudoobscura (Fruit fly).